The primary structure comprises 350 residues: uncharacterized protein (350 aa).

Disordered stretches follow at residues 1–21 (MDSF…SSLN), 237–266 (NSDV…PISP), and 278–298 (EMST…KKRT). Polar residues-rich tracts occupy residues 10–21 (KPTTATSNSSLN) and 246–259 (EDSS…TKPS). The segment covering 287–298 (SRSRTPSSKKRT) has biased composition (basic residues).

The protein resides in the nucleus. This is an uncharacterized protein from Schizosaccharomyces pombe (strain 972 / ATCC 24843) (Fission yeast).